Consider the following 400-residue polypeptide: Enoyl-[acyl-carrier-protein] reductase [NADH] (400 aa).

Residues 48–53 (GSSSGY), 74–75 (FE), 111–112 (DA), and 139–140 (LA) contribute to the NAD(+) site. Tyr-225 lines the substrate pocket. The active-site Proton donor is Tyr-235. NAD(+) contacts are provided by residues Lys-244 and 273–275 (VVT).

This sequence belongs to the TER reductase family. As to quaternary structure, monomer.

It carries out the reaction a 2,3-saturated acyl-[ACP] + NAD(+) = a (2E)-enoyl-[ACP] + NADH + H(+). It functions in the pathway lipid metabolism; fatty acid biosynthesis. Functionally, involved in the final reduction of the elongation cycle of fatty acid synthesis (FAS II). Catalyzes the reduction of a carbon-carbon double bond in an enoyl moiety that is covalently linked to an acyl carrier protein (ACP). The protein is Enoyl-[acyl-carrier-protein] reductase [NADH] of Shewanella denitrificans (strain OS217 / ATCC BAA-1090 / DSM 15013).